We begin with the raw amino-acid sequence, 346 residues long: Uroporphyrinogen decarboxylase (346 aa).

Substrate is bound by residues 26–30, Asp76, Tyr153, Ser208, and His323; that span reads RQAGR.

This sequence belongs to the uroporphyrinogen decarboxylase family. Homodimer.

The protein localises to the cytoplasm. It catalyses the reaction uroporphyrinogen III + 4 H(+) = coproporphyrinogen III + 4 CO2. It functions in the pathway porphyrin-containing compound metabolism; protoporphyrin-IX biosynthesis; coproporphyrinogen-III from 5-aminolevulinate: step 4/4. Functionally, catalyzes the decarboxylation of four acetate groups of uroporphyrinogen-III to yield coproporphyrinogen-III. This chain is Uroporphyrinogen decarboxylase, found in Prochlorococcus marinus (strain MIT 9515).